A 640-amino-acid chain; its full sequence is Threonine--tRNA ligase (640 aa).

Positions 1–60 constitute a TGS domain; sequence MKITFPDGAVKEFEPGVSTADIAASISPGLKKKALAGKLNGELLDLVTPIHEDGAIEIVT. Positions 241–538 are catalytic; it reads DHRKLGKELE…LIEEYKGAFP (298 aa). Cys334, His385, and His515 together coordinate Zn(2+).

The protein belongs to the class-II aminoacyl-tRNA synthetase family. In terms of assembly, homodimer. Zn(2+) is required as a cofactor.

It is found in the cytoplasm. The enzyme catalyses tRNA(Thr) + L-threonine + ATP = L-threonyl-tRNA(Thr) + AMP + diphosphate + H(+). Functionally, catalyzes the attachment of threonine to tRNA(Thr) in a two-step reaction: L-threonine is first activated by ATP to form Thr-AMP and then transferred to the acceptor end of tRNA(Thr). Also edits incorrectly charged L-seryl-tRNA(Thr). The protein is Threonine--tRNA ligase of Listeria welshimeri serovar 6b (strain ATCC 35897 / DSM 20650 / CCUG 15529 / CIP 8149 / NCTC 11857 / SLCC 5334 / V8).